A 1674-amino-acid polypeptide reads, in one-letter code: Maestro heat-like repeat-containing protein family member 2A (1674 aa).

The tract at residues 1–26 is disordered; sequence MTEAITEAAVASSEEVSEERDDLGPL. HEAT repeat units lie at residues 73–96, 97–133, 195–234, 254–292, 382–419, 424–461, 573–612, 615–641, 642–679, 739–776, 993–1030, 1221–1263, 1381–1420, and 1627–1674; these read ATTE…ISTQ, RKVN…EMRE, MPYM…TVQF, LKVF…LLLP, SYPK…ADEP, RAIY…CGYQ, PAPQ…SIAP, ADMW…DQKA, WEDK…SFDS, KTVL…ETVK, GQFG…LHAS, DPLM…SHRP, EKLL…GAPK, and LDFP…QGMS.

In Homo sapiens (Human), this protein is Maestro heat-like repeat-containing protein family member 2A (MROH2A).